The primary structure comprises 5112 residues: Malformin synthetase mlfA (5112 aa).

Positions 225-616 (ERHAANRPHS…CGRADTQVKL (392 aa)) are adenylation 1. Residues 757–830 (SRLEQEIQLA…EAASLAEVQE (74 aa)) form the Carrier 1 domain. S791 carries the post-translational modification O-(pantetheine 4'-phosphoryl)serine. Positions 868-1299 (EDVFPCTTMQ…ALDSLTLLQA (432 aa)) are condensation 1. Residues 1327–1716 (DRRVTRQPDT…GRKDTQVKLR (390 aa)) are adenylation 2. One can recognise a Carrier 2 domain in the interval 1854–1931 (TAASELERTL…QLAAELGESP (78 aa)). The residue at position 1891 (S1891) is an O-(pantetheine 4'-phosphoryl)serine. Disordered stretches follow at residues 1926-1961 (ELGESPRSSTSSASSSTEDEFTISTPDDSSTNDGVD) and 1994-2034 (GGSS…VPEP). Low complexity-rich tracts occupy residues 1930 to 1941 (SPRSSTSSASSS) and 1994 to 2012 (GGSSSSKTPSVSSSSSSSS). Residues 2064-2479 (EDIYPATALQ…AVSYSDKQTL (416 aa)) form a condensation 2 region. The segment at 2502–2894 (IRTPHAPAVC…IGRRDGQVKL (393 aa)) is adenylation 3. In terms of domain architecture, Carrier 3 spans 3030–3106 (RPTTAKECEM…QLLFHLRNAK (77 aa)). At S3067 the chain carries O-(pantetheine 4'-phosphoryl)serine. 2 condensation regions span residues 3122-3586 (WVDL…TYEQ) and 3607-4044 (NIYP…EQLV). The interval 4069-4459 (HSSRQAVCAW…VGRKDNQIKF (391 aa)) is adenylation 4. In terms of domain architecture, Carrier 4 spans 4593–4669 (MPSTEAECIM…DLARHNSLVQ (77 aa)). Position 4630 is an O-(pantetheine 4'-phosphoryl)serine (S4630). A condensation 5 region spans residues 4724–5106 (IVVDIPGRIS…VEKVVALLRD (383 aa)).

Belongs to the NRP synthetase family.

Its pathway is secondary metabolite biosynthesis. Nonribosomal peptide synthetase; part of the gene cluster that mediates the biosynthesis of malformins, cyclic pentapeptides with a disulfide bond between 2 consecutive cysteins, that show potential anti-tumor as well as antimalarial and antitrypanosomal properties. The nonribosomal peptide synthetase mlfA is responsible of the formation of the cyclic pentapeptide. MlfA probably acts iteratively on one amino acid and possesses multiple amino acid specificities since it is involved in the biosynthesis of multiple malformins, including malformin C and malformin A2. Malformin C corresponds to a cyclo[D-Cys-D-Cys-Val-D-Leu-Val] pentapeptide whereas malformin A2 corresponds to a cyclo[D-Cys-D-Cys-Val-D-Leu-Ile] pentapeptide. The malformin biosynthesis clusters in malformin-producing fungi also contain enzymes involved in the formation of the disulfide bond between the two consecutive cysteins within malformins, in addition to additional tailoring enzymes such as methyltransferases or oxidoreductases. They are also composed of up to 4 major facilitator superfamily transporters, and transcription factors probably involved in the regulation of the expression of those clusters. The chain is Malformin synthetase mlfA from Aspergillus brasiliensis (strain CBS 101740 / IMI 381727 / IBT 21946).